We begin with the raw amino-acid sequence, 398 residues long: Tryptophan synthase beta chain (398 aa).

The residue at position 90 (lysine 90) is an N6-(pyridoxal phosphate)lysine.

The protein belongs to the TrpB family. Tetramer of two alpha and two beta chains. Pyridoxal 5'-phosphate serves as cofactor.

The catalysed reaction is (1S,2R)-1-C-(indol-3-yl)glycerol 3-phosphate + L-serine = D-glyceraldehyde 3-phosphate + L-tryptophan + H2O. Its pathway is amino-acid biosynthesis; L-tryptophan biosynthesis; L-tryptophan from chorismate: step 5/5. The beta subunit is responsible for the synthesis of L-tryptophan from indole and L-serine. In Anoxybacillus flavithermus (strain DSM 21510 / WK1), this protein is Tryptophan synthase beta chain.